Reading from the N-terminus, the 483-residue chain is tRNA sulfurtransferase (483 aa).

One can recognise a THUMP domain in the interval 62-166; the sequence is PQICDALTRV…QDKLTLIKAR (105 aa). Residues 184-185, lysine 266, glycine 288, and glutamine 297 each bind ATP; that span reads LI. A disulfide bridge connects residues cysteine 345 and cysteine 457. The 79-residue stretch at 405–483 folds into the Rhodanese domain; sequence LADTDVLLDI…GYTNVKVYRP (79 aa). Cysteine 457 acts as the Cysteine persulfide intermediate in catalysis.

It belongs to the ThiI family.

It localises to the cytoplasm. It carries out the reaction [ThiI sulfur-carrier protein]-S-sulfanyl-L-cysteine + a uridine in tRNA + 2 reduced [2Fe-2S]-[ferredoxin] + ATP + H(+) = [ThiI sulfur-carrier protein]-L-cysteine + a 4-thiouridine in tRNA + 2 oxidized [2Fe-2S]-[ferredoxin] + AMP + diphosphate. It catalyses the reaction [ThiS sulfur-carrier protein]-C-terminal Gly-Gly-AMP + S-sulfanyl-L-cysteinyl-[cysteine desulfurase] + AH2 = [ThiS sulfur-carrier protein]-C-terminal-Gly-aminoethanethioate + L-cysteinyl-[cysteine desulfurase] + A + AMP + 2 H(+). It functions in the pathway cofactor biosynthesis; thiamine diphosphate biosynthesis. In terms of biological role, catalyzes the ATP-dependent transfer of a sulfur to tRNA to produce 4-thiouridine in position 8 of tRNAs, which functions as a near-UV photosensor. Also catalyzes the transfer of sulfur to the sulfur carrier protein ThiS, forming ThiS-thiocarboxylate. This is a step in the synthesis of thiazole, in the thiamine biosynthesis pathway. The sulfur is donated as persulfide by IscS. This chain is tRNA sulfurtransferase, found in Yersinia enterocolitica serotype O:8 / biotype 1B (strain NCTC 13174 / 8081).